A 259-amino-acid polypeptide reads, in one-letter code: Imidazole glycerol phosphate synthase subunit HisF (259 aa).

Catalysis depends on residues Asp-11 and Asp-130.

The protein belongs to the HisA/HisF family. As to quaternary structure, heterodimer of HisH and HisF.

The protein resides in the cytoplasm. The enzyme catalyses 5-[(5-phospho-1-deoxy-D-ribulos-1-ylimino)methylamino]-1-(5-phospho-beta-D-ribosyl)imidazole-4-carboxamide + L-glutamine = D-erythro-1-(imidazol-4-yl)glycerol 3-phosphate + 5-amino-1-(5-phospho-beta-D-ribosyl)imidazole-4-carboxamide + L-glutamate + H(+). Its pathway is amino-acid biosynthesis; L-histidine biosynthesis; L-histidine from 5-phospho-alpha-D-ribose 1-diphosphate: step 5/9. Its function is as follows. IGPS catalyzes the conversion of PRFAR and glutamine to IGP, AICAR and glutamate. The HisF subunit catalyzes the cyclization activity that produces IGP and AICAR from PRFAR using the ammonia provided by the HisH subunit. In Polaromonas naphthalenivorans (strain CJ2), this protein is Imidazole glycerol phosphate synthase subunit HisF.